The primary structure comprises 91 residues: Islet amyloid polypeptide (91 aa).

The signal sequence occupies residues Met1–Gly22. A propeptide spanning residues Gly23 to Glu33 is cleaved from the precursor. A disulfide bridge links Cys37 with Cys42. Tyr72 is subject to Tyrosine amide. Residues Val78 to Ile91 constitute a propeptide that is removed on maturation.

Belongs to the calcitonin family. Can form homodimers. Interacts with IDE and INS. Interaction with INS inhibits homodimerization and fibril formation.

The protein localises to the secreted. Functionally, amylin/IAPP is a glucoregulatory peptide hormone that plays an important role in the regulation of energy homeostasis. Selectively inhibits insulin-stimulated glucose utilization and glycogen deposition in muscle, while not affecting adipocyte glucose metabolism. IAPP function is mediated by the CALCR-RAMPs (AMYRs) receptor complexes. Amylin can also bind CALCR receptor in the absence of RAMPs, although it is more selective for AMYRs. This is Islet amyloid polypeptide (IAPP) from Bos taurus (Bovine).